A 165-amino-acid polypeptide reads, in one-letter code: Large ribosomal subunit protein uL10 (165 aa).

The protein belongs to the universal ribosomal protein uL10 family. As to quaternary structure, part of the ribosomal stalk of the 50S ribosomal subunit. The N-terminus interacts with L11 and the large rRNA to form the base of the stalk. The C-terminus forms an elongated spine to which L12 dimers bind in a sequential fashion forming a multimeric L10(L12)X complex.

Its function is as follows. Forms part of the ribosomal stalk, playing a central role in the interaction of the ribosome with GTP-bound translation factors. The sequence is that of Large ribosomal subunit protein uL10 from Mycoplasmopsis synoviae (strain 53) (Mycoplasma synoviae).